Reading from the N-terminus, the 346-residue chain is Protein RecA (346 aa).

65 to 72 (GPESSGKT) is an ATP binding site.

It belongs to the RecA family.

It localises to the cytoplasm. In terms of biological role, can catalyze the hydrolysis of ATP in the presence of single-stranded DNA, the ATP-dependent uptake of single-stranded DNA by duplex DNA, and the ATP-dependent hybridization of homologous single-stranded DNAs. It interacts with LexA causing its activation and leading to its autocatalytic cleavage. The chain is Protein RecA from Enterococcus mundtii.